Consider the following 416-residue polypeptide: Enterobactin exporter EntS (416 aa).

The Cytoplasmic segment spans residues 1–21 (MNKQSWLLNLSLLKTHPAFRA). The chain crosses the membrane as a helical span at residues 22–42 (VFLARFISIVSLGLLGVAVPV). Over 43–55 (QIQMMTHSTWLVG) the chain is Periplasmic. The chain crosses the membrane as a helical span at residues 56 to 76 (LSVTLTGGAMFVGLMVGGVLA). The Cytoplasmic portion of the chain corresponds to 77 to 83 (DRYERKK). A helical transmembrane segment spans residues 84–104 (VILLARGTCGIGFIGLCLNAL). Topologically, residues 105–109 (LPEPS) are periplasmic. The chain crosses the membrane as a helical span at residues 110–130 (LLAIYLLGLWDGFFASLGVTA). Residues 131–156 (LLAATPALVGRENLMQAGAITMLTVR) lie on the Cytoplasmic side of the membrane. Residues 157–177 (LGSVISPMIGGLLLATGGVAW) traverse the membrane as a helical segment. Position 178 (Asn178) is a topological domain, periplasmic. The chain crosses the membrane as a helical span at residues 179 to 199 (YGLAAAGTFITLLPLLSLPAL). Residues 200-218 (PPPPQPREHPLKSLLAGFR) are Cytoplasmic-facing. Residues 219–239 (FLLASPLVGGIALLGGLLTMA) traverse the membrane as a helical segment. Over 240–256 (SAVRVLYPALADNWQMS) the chain is Periplasmic. The chain crosses the membrane as a helical span at residues 257-277 (AAEIGFLYAAIPLGAAIGALT). At 278–287 (SGKLAHSARP) the chain is on the cytoplasmic side. Residues 288–307 (GLLMLLSTLGSFLAIGLFGL) form a helical membrane-spanning segment. Residues 308 to 313 (MPMWIL) are Periplasmic-facing. A helical membrane pass occupies residues 314 to 336 (GVVCLALFGWLSAVSSLLQYTML). At 337 to 356 (QTQTPEAMLGRINGLWTAQN) the chain is on the cytoplasmic side. The helical transmembrane segment at 357–377 (VTGDAIGAALLGGLGAMMTPV) threads the bilayer. A topological domain (periplasmic) is located at residue Ala378. The helical transmembrane segment at 379–399 (SASASGFGLLIIGVLLLLVLV) threads the bilayer. The Cytoplasmic segment spans residues 400–416 (ELRRFRQTPPQVTASDS).

Belongs to the major facilitator superfamily. EntS (TC 2.A.1.38) family.

It is found in the cell inner membrane. Functionally, component of an export pathway for enterobactin. This chain is Enterobactin exporter EntS, found in Shigella boydii serotype 4 (strain Sb227).